Consider the following 442-residue polypeptide: Protein cereblon (442 aa).

Residues 1–45 are disordered; that stretch reads MAGEGDQQDAAHNMGNHLPLLPAESEEEDEMEVEDQDSKEAKKPN. Over residues 24–35 the composition is skewed to acidic residues; sequence ESEEEDEMEVED. S25 is modified (phosphoserine). Residues 81-319 enclose the Lon N-terminal domain; it reads IPVLPQVMMI…CELDIMNKCT (239 aa). A CULT domain is found at 318–426; that stretch reads CTSLCCKQCQ…LTRSALLPTI (109 aa). Residues C323 and C326 each coordinate Zn(2+). The (S)-thalidomide site is built by H378, W380, and W386. C391 and C394 together coordinate Zn(2+).

It belongs to the CRBN family. Interacts with KCNT1. Component of a DCX (DDB1-CUL4-X-box) protein ligase complex, at least composed of CRBN, CUL4A, DDB1 and RBX1. Interacts directly with DDB1. Interacts (in pomalidomide-bound form) with IKZF1 and IKZF3. Interacts with ILF2. Interacts with TRAF6 and ECSIT. In terms of processing, ubiquitinated, ubiquitination is mediated by its own DCX protein ligase complex. In terms of tissue distribution, widely expressed. Highly expressed in brain.

The protein localises to the cytoplasm. It localises to the nucleus. It is found in the membrane. It functions in the pathway protein modification; protein ubiquitination. Functionally, substrate recognition component of a DCX (DDB1-CUL4-X-box) E3 protein ligase complex that mediates the ubiquitination and subsequent proteasomal degradation of target proteins, such as MEIS2, ILF2 or GLUL. Normal degradation of key regulatory proteins is required for normal limb outgrowth and expression of the fibroblast growth factor FGF8. Maintains presynaptic glutamate release and consequently cognitive functions, such as memory and learning, by negatively regulating large-conductance calcium-activated potassium (BK) channels in excitatory neurons. Likely to function by regulating the assembly and neuronal surface expression of BK channels via its interaction with KCNT1. May also be involved in regulating anxiety-like behaviors via a BK channel-independent mechanism. Plays a negative role in TLR4 signaling by interacting with TRAF6 and ECSIT, leading to inhibition of ECSIT ubiquitination, an important step of the signaling. In Homo sapiens (Human), this protein is Protein cereblon (CRBN).